A 660-amino-acid polypeptide reads, in one-letter code: Ankyrin repeat domain-containing protein OPG023 (660 aa).

9 ANK repeats span residues 31-64, 101-131, 135-166, 190-222, 226-257, 268-302, 325-359, 449-478, and 482-512; these read FKNN…PLHK, NDFN…DLSV, NHRS…SVLY, YIIA…KPSS, NYCT…NTAY, RGIM…PYGI, NSDV…VVNK, RGET…DVNI, and NGYT…TLDC. The PRANC/F-box-like stretch occupies residues 578 to 658; that stretch reads NTMFSLIFTE…PYTIKYKIFE (81 aa).

Belongs to the orthopoxvirus OPG023 family. As to quaternary structure, interacts (via N-terminus) with host RELA. Interacts (via PRANC/F-box-like domain) with the SKP1 component of the host SCF ubiquitin ligase complex.

Its function is as follows. Substrate-specific adapter of SKP1-containing E3 ubiquitin-protein ligases which mediate the ubiquitination and subsequent proteasomal degradation of host target proteins. Prevents activation and subsequent nuclear localization of NF-kappa-B in infected cells, by targeting NF-kappa-B RELA subunit to the SCF E3 ligase complex. The sequence is that of Ankyrin repeat domain-containing protein OPG023 (OPG023) from Cynomys gunnisoni (Gunnison's prairie dog).